The following is a 67-amino-acid chain: Large ribosomal subunit protein bL35 (67 aa).

The protein belongs to the bacterial ribosomal protein bL35 family.

The chain is Large ribosomal subunit protein bL35 from Sinorhizobium medicae (strain WSM419) (Ensifer medicae).